The chain runs to 217 residues: MKHQFSALEARVIGCMLEKQVTTPEQYPLSVNGVVTACNQKTNREPVMNLSEAQVQETLDQLVKRHYLRTVSGFGNRVTKYEQRFCNSEFGDLKFSPAEVALVTTLLLRGAQTPGELRSRAARMHEFSDTAALESALETLATREDGPFVTRLPREPGKRESRYMHLFCGEPDTATLAASNETAGVDTDALTARVEALELEVAELRERLESLLGHLGE.

It belongs to the UPF0502 family.

The sequence is that of UPF0502 protein ESA_02280 from Cronobacter sakazakii (strain ATCC BAA-894) (Enterobacter sakazakii).